The following is a 106-amino-acid chain: Glutaredoxin-1 (106 aa).

An N-acetylalanine modification is found at Ala1. Residues 2–105 (QEFVNSKIQP…ARLKEMGALR (104 aa)) form the Glutaredoxin domain. The residue at position 8 (Lys8) is an N6-succinyllysine. 2 cysteine pairs are disulfide-bonded: Cys22–Cys25 and Cys78–Cys82.

This sequence belongs to the glutaredoxin family.

It is found in the cytoplasm. Its function is as follows. Has a glutathione-disulfide oxidoreductase activity in the presence of NADPH and glutathione reductase. Reduces low molecular weight disulfides and proteins. This chain is Glutaredoxin-1 (GLRX), found in Oryctolagus cuniculus (Rabbit).